Here is a 478-residue protein sequence, read N- to C-terminus: tRNA(Ile)-lysidine synthase (478 aa).

27–32 provides a ligand contact to ATP; it reads SGGSDS.

This sequence belongs to the tRNA(Ile)-lysidine synthase family.

The protein resides in the cytoplasm. The enzyme catalyses cytidine(34) in tRNA(Ile2) + L-lysine + ATP = lysidine(34) in tRNA(Ile2) + AMP + diphosphate + H(+). Functionally, ligates lysine onto the cytidine present at position 34 of the AUA codon-specific tRNA(Ile) that contains the anticodon CAU, in an ATP-dependent manner. Cytidine is converted to lysidine, thus changing the amino acid specificity of the tRNA from methionine to isoleucine. The sequence is that of tRNA(Ile)-lysidine synthase from Rickettsia africae (strain ESF-5).